The chain runs to 235 residues: Small ribosomal subunit protein eS4 (235 aa).

Positions 37–100 (LPLGIIIRDI…NETYRMFQDE (64 aa)) constitute an S4 RNA-binding domain.

Belongs to the eukaryotic ribosomal protein eS4 family.

This chain is Small ribosomal subunit protein eS4, found in Methanosarcina barkeri (strain Fusaro / DSM 804).